An 88-amino-acid polypeptide reads, in one-letter code: Phosphocarrier protein HPr (88 aa).

Residues Met1–Glu88 form the HPr domain. Residue His15 is the Pros-phosphohistidine intermediate of the active site. At Ser46 the chain carries Phosphoserine; by HPrK/P.

The protein belongs to the HPr family.

The protein localises to the cytoplasm. Phosphorylation on Ser-46 inhibits the phosphoryl transfer from enzyme I to HPr. General (non sugar-specific) component of the phosphoenolpyruvate-dependent sugar phosphotransferase system (sugar PTS). This major carbohydrate active-transport system catalyzes the phosphorylation of incoming sugar substrates concomitantly with their translocation across the cell membrane. The phosphoryl group from phosphoenolpyruvate (PEP) is transferred to the phosphoryl carrier protein HPr by enzyme I. Phospho-HPr then transfers it to the PTS EIIA domain. Functionally, P-Ser-HPr interacts with the catabolite control protein A (CcpA), forming a complex that binds to DNA at the catabolite response elements cre, operator sites preceding a large number of catabolite-regulated genes. Thus, P-Ser-HPr is a corepressor in carbon catabolite repression (CCR), a mechanism that allows bacteria to coordinate and optimize the utilization of available carbon sources. P-Ser-HPr also plays a role in inducer exclusion, in which it probably interacts with several non-PTS permeases and inhibits their transport activity. The polypeptide is Phosphocarrier protein HPr (ptsH) (Lactococcus lactis subsp. cremoris (Streptococcus cremoris)).